The sequence spans 62 residues: Pelophylaxin-4 (62 aa).

The signal sequence occupies residues 1–22 (MLTLKKSMLLIFFLGTINFSLC). The propeptide occupies 23–45 (EQERNADEEERRDEPEERDVEVQ). Leu-60 carries the leucine amide modification. Gly-61 is a propeptide.

As to expression, expressed by the skin glands.

The protein localises to the secreted. Antimicrobial peptide. In Pelophylax fukienensis (Fukien gold-striped pond frog), this protein is Pelophylaxin-4.